Consider the following 640-residue polypeptide: (Z)-beta-ocimene synthase TPS13PK, chloroplastic (640 aa).

A chloroplast-targeting transit peptide spans 1–95 (MAALVSTVSS…PFKDEAYVKR (95 aa)). The disordered stretch occupies residues 50–69 (MSTNNNNNNNQKNSSRRSAN). Positions 60–69 (QKNSSRRSAN) are enriched in polar residues. Arginine 334, aspartate 371, aspartate 375, arginine 515, and aspartate 518 together coordinate (2E)-geranyl diphosphate. Positions 371 and 375 each coordinate Mg(2+). Positions 371-375 (DDIYD) match the DDXXD motif motif. The Mg(2+) site is built by aspartate 518, threonine 522, and glutamate 526.

Belongs to the terpene synthase family. In terms of assembly, monomer. Mg(2+) is required as a cofactor.

It is found in the plastid. Its subcellular location is the chloroplast. It catalyses the reaction (2E)-geranyl diphosphate = (Z)-beta-ocimene + diphosphate. Its pathway is secondary metabolite biosynthesis; terpenoid biosynthesis. Involved in monoterpene (C10) olefins biosynthesis, constituants of cannabinoids and terpenoids-rich resins. Catalyzes mainly the conversion of (2E)-geranyl diphosphate to (Z)-beta-ocimene. This chain is (Z)-beta-ocimene synthase TPS13PK, chloroplastic, found in Cannabis sativa (Hemp).